The following is a 707-amino-acid chain: Complement C1r-A subcomponent (707 aa).

The signal sequence occupies residues 1 to 16 (MWLFALLVTLFYGVEG). Residues 17–140 (SIYLPQKLYG…KGFLAYYQAV (124 aa)) form the CUB 1 domain. Residues E65, D73, and D118 each contribute to the Ca(2+) site. C70 and C88 are disulfide-bonded. A glycan (N-linked (GlcNAc...) asparagine) is linked at N124. 3 residues coordinate Ca(2+): D141, L142, and E144. The EGF-like; calcium-binding domain occupies 141–189 (DLDECASQPNSVEEGLQPRCQHLCHNYVGGYFCSCHPGYELQKDGQSCQ). Disulfide bonds link C145–C164, C160–C173, C175–C188, and C192–C219. Ca(2+) is bound by residues N166, Y167, and G170. A (3R)-3-hydroxyasparagine modification is found at N166. The CUB 2 domain occupies 192–304 (CSSELYTEPS…RGWKLHYTTE (113 aa)). S205 is subject to Phosphoserine; by CK2. N220 is a glycosylation site (N-linked (GlcNAc...) asparagine). Residues D242, D252, D289, and D293 each contribute to the Ca(2+) site. C249 and C267 are oxidised to a cystine. 2 consecutive Sushi domains span residues 306–372 (IKCP…RCKI) and 373–448 (KNCG…RCLP). Intrachain disulfides connect C308–C357, C337–C370, C375–C428, C405–C446, and C450–C579. The 242-residue stretch at 463–704 (IIRGQPARPG…YVDWIKKEMG (242 aa)) folds into the Peptidase S1 domain. Residues H501 and D559 each act as charge relay system in the active site. The N-linked (GlcNAc...) asparagine glycan is linked to N583. Intrachain disulfides connect C622–C641 and C652–C682. S656 serves as the catalytic Charge relay system.

Belongs to the peptidase S1 family. Core component of the complement C1 complex, a calcium-dependent complex composed of 1 molecule of the C1Q subcomplex, 2 molecules of C1R and 2 molecules of C1S. The C1Q subcomplex is composed 18 subunits: 3 chains of C1QA, C1QB, and C1QC trimerize to form 6 collagen-like triple helices connected to six globular ligand-recognition modules. Within the C1 complex, C1R is a dimer of identical chains, each of which is activated by cleavage into two chains, heavy and light, connected by disulfide bonds. Cleaved and activated by autocatalytic processing to generate Complement C1r subcomponent heavy and light chains that are connected by disulfide bonds. Post-translationally, the iron and 2-oxoglutarate dependent 3-hydroxylation of aspartate and asparagine is (R) stereospecific within EGF domains.

The protein localises to the secreted. The protein resides in the cell surface. It carries out the reaction Selective cleavage of Lys(or Arg)-|-Ile bond in complement subcomponent C1s to form the active form of C1s (EC 3.4.21.42).. Its activity is regulated as follows. Activated by the C1Q subcomplex of the C1 complex following C1Q binding to immunoglobulins (IgG or IgM) complexed with antigens to form antigen-antibody complexes on the surface of pathogens. Immunoglobulin-binding promotes autoactivation of C1R, which results in the cleavage of the Arg-Ile bond in the catalytic domain. Its function is as follows. Serine protease component of the complement C1 complex, a multiprotein complex that initiates the classical pathway of the complement system, a cascade of proteins that leads to phagocytosis and breakdown of pathogens and signaling that strengthens the adaptive immune system. C1R catalyzes the first enzymatic step in the classical complement pathway: it is activated by the C1Q subcomplex of the C1 complex, which associates with IgG or IgM immunoglobulins complexed with antigens to form antigen-antibody complexes on the surface of pathogens. Immunoglobulin-binding promotes the autocatalytic cleavage and activation of C1R. Activated C1R then cleaves and activates C1S, the second protease of the classical complement pathway. It is unclear if C1R activates C1S within single, strained C1 complexes or between neighboring C1 complexes on surfaces. This is Complement C1r-A subcomponent (C1ra) from Mus musculus (Mouse).